The primary structure comprises 298 residues: MDYLDKLTHLAQVRGEINIRCEFQGEWQISHQEKDAGKGIFHLIEQGECWLTLNEKQFHLKEGDVFFLPQNQPHSMHYSANKRADIPTKKSHQGLFELHQIGRGTPDLKMFCGNFYYQQDALLTASMPEYLHINLCDTPIHPLVQLFLQEAQKNDAGTKSVVDALSNVLLIYILRHAIQQNLIEQGILFALQDKRLNTALIAILQQPQNDWHIEQLAELATMSRANFIRIFQQHIGMSPGRFLTKVRLQSAAFLLKQSQQSVLAIALEVGYQSEAHFCKVFKNYYQLSPSQYRKSVSL.

The HTH araC/xylS-type domain occupies 194–295 (KRLNTALIAI…QLSPSQYRKS (102 aa)). DNA-binding regions (H-T-H motif) lie at residues 214–235 (EQLA…QQHI) and 262–285 (VLAI…KNYY).

This is an uncharacterized protein from Haemophilus influenzae (strain ATCC 51907 / DSM 11121 / KW20 / Rd).